Here is a 189-residue protein sequence, read N- to C-terminus: Ribosome hibernation promotion factor (189 aa).

The protein belongs to the HPF/YfiA ribosome-associated protein family. Long HPF subfamily. As to quaternary structure, interacts with 100S ribosomes. Not associated with 70S ribosome monomers, about 1 monomer per ribosome.

The protein localises to the cytoplasm. In terms of biological role, required for dimerization of active 70S ribosomes into 100S ribosomes in stationary phase; 100S ribosomes are translationally inactive and sometimes present during exponential growth. May not be the only factor implicated. Might negatively regulate the activity of the sigma-54 factor (SigL). The chain is Ribosome hibernation promotion factor (yvyD) from Bacillus subtilis (strain 168).